The following is a 200-amino-acid chain: Holliday junction resolvase RecU (200 aa).

The segment at 1 to 25 (MTIRYPNGKRYNQASQPQKTPIKTH) is disordered. Polar residues predominate over residues 10–25 (RYNQASQPQKTPIKTH). 4 residues coordinate Mg(2+): Thr85, Asp87, Glu100, and Gln119.

This sequence belongs to the RecU family. Mg(2+) serves as cofactor.

The protein resides in the cytoplasm. It catalyses the reaction Endonucleolytic cleavage at a junction such as a reciprocal single-stranded crossover between two homologous DNA duplexes (Holliday junction).. In terms of biological role, endonuclease that resolves Holliday junction intermediates in genetic recombination. Cleaves mobile four-strand junctions by introducing symmetrical nicks in paired strands. Promotes annealing of linear ssDNA with homologous dsDNA. Required for DNA repair, homologous recombination and chromosome segregation. The protein is Holliday junction resolvase RecU of Bacillus cereus (strain G9842).